Reading from the N-terminus, the 128-residue chain is Glycine cleavage system H protein (128 aa).

One can recognise a Lipoyl-binding domain in the interval 24-106 (LVRIGISEFA…HGEGWLLIIR (83 aa)). K65 carries the post-translational modification N6-lipoyllysine.

This sequence belongs to the GcvH family. As to quaternary structure, the glycine cleavage system is composed of four proteins: P, T, L and H. (R)-lipoate is required as a cofactor.

Its function is as follows. The glycine cleavage system catalyzes the degradation of glycine. The H protein shuttles the methylamine group of glycine from the P protein to the T protein. The protein is Glycine cleavage system H protein of Prochlorococcus marinus (strain NATL2A).